A 310-amino-acid polypeptide reads, in one-letter code: N-acetyl-gamma-glutamyl-phosphate reductase (310 aa).

The active site involves C116.

The protein belongs to the NAGSA dehydrogenase family. Type 2 subfamily.

The protein localises to the cytoplasm. It carries out the reaction N-acetyl-L-glutamate 5-semialdehyde + phosphate + NADP(+) = N-acetyl-L-glutamyl 5-phosphate + NADPH + H(+). The protein operates within amino-acid biosynthesis; L-arginine biosynthesis; N(2)-acetyl-L-ornithine from L-glutamate: step 3/4. Its function is as follows. Catalyzes the NADPH-dependent reduction of N-acetyl-5-glutamyl phosphate to yield N-acetyl-L-glutamate 5-semialdehyde. The sequence is that of N-acetyl-gamma-glutamyl-phosphate reductase from Chelativorans sp. (strain BNC1).